A 520-amino-acid polypeptide reads, in one-letter code: Ubiquitin carboxyl-terminal hydrolase 3 (520 aa).

Methionine 1 is subject to N-acetylmethionine. The UBP-type zinc-finger motif lies at 1–121 (MECPHLSSSV…QKVREHLQNL (121 aa)). Zn(2+) contacts are provided by cysteine 3, histidine 5, cysteine 29, cysteine 32, cysteine 41, cysteine 44, cysteine 49, histidine 56, histidine 60, histidine 82, cysteine 95, and cysteine 98. The USP domain maps to 159–511 (TGLRNLGNTC…KAYILFYVEH (353 aa)). The active-site Nucleophile is the cysteine 168. Histidine 471 (proton acceptor) is an active-site residue.

It belongs to the peptidase C19 family. USP3 subfamily. Interacts (via UBP-type domain) with H2A; the interaction is less efficient than with monoubiquitinated H2A. As to expression, expressed in all tissues examined, with strongest expression in pancreas.

The protein localises to the nucleus. It is found in the cytoplasm. It carries out the reaction Thiol-dependent hydrolysis of ester, thioester, amide, peptide and isopeptide bonds formed by the C-terminal Gly of ubiquitin (a 76-residue protein attached to proteins as an intracellular targeting signal).. Its function is as follows. Deubiquitinase that plays a role in several cellular processes including transcriptional regulation, cell cycle progression or innate immunity. In response to DNA damage, deubiquitinates monoubiquitinated target proteins such as histone H2A and H2AX and thereby counteracts RNF168- and RNF8-mediated ubiquitination. In turn, participates in the recruitment of DNA damage repair factors to DNA break sites. Required for proper progression through S phase and subsequent mitotic entry. Acts as a positive regulator of TP53 by deubiquitinating and stabilizing it to promote normal cell proliferation and transformation. Participates in establishing tolerance innate immune memory through non-transcriptional feedback. Mechanistically, negatively regulates TLR-induced NF-kappa-B signaling by targeting and removing the 'Lys-63'-linked polyubiquitin chains on MYD88. Negatively regulates the activation of type I interferon signaling by mediating 'Lys-63'-linked polyubiquitin chains on RIGI and IFIH1. Also deubiquinates ASC/PYCARD, the central adapter mediating the assembly and activation of most inflammasomes, and thereby promotes inflammasome activation. The sequence is that of Ubiquitin carboxyl-terminal hydrolase 3 (USP3) from Homo sapiens (Human).